Consider the following 89-residue polypeptide: UPF0367 protein MAE_19160 (89 aa).

Belongs to the UPF0367 family.

In Microcystis aeruginosa (strain NIES-843 / IAM M-2473), this protein is UPF0367 protein MAE_19160.